Consider the following 530-residue polypeptide: Arginine--tRNA ligase (530 aa).

The 'HIGH' region motif lies at 113-123 (ANPTGPLHIGH).

The protein belongs to the class-I aminoacyl-tRNA synthetase family. As to quaternary structure, monomer.

It is found in the cytoplasm. It carries out the reaction tRNA(Arg) + L-arginine + ATP = L-arginyl-tRNA(Arg) + AMP + diphosphate. The polypeptide is Arginine--tRNA ligase (Campylobacter jejuni subsp. jejuni serotype O:6 (strain 81116 / NCTC 11828)).